Here is a 336-residue protein sequence, read N- to C-terminus: Formimidoylglutamase (336 aa).

Over residues 1 to 10 (MNPNFTTEHT) the composition is skewed to polar residues. A disordered region spans residues 1–22 (MNPNFTTEHTWQGRHDPEDGQA). Residues 11–22 (WQGRHDPEDGQA) show a composition bias toward basic and acidic residues. Residues H127, D157, H159, D161, D254, and D256 each coordinate Mn(2+).

It belongs to the arginase family. Mn(2+) is required as a cofactor.

The catalysed reaction is N-formimidoyl-L-glutamate + H2O = formamide + L-glutamate. Its pathway is amino-acid degradation; L-histidine degradation into L-glutamate; L-glutamate from N-formimidoyl-L-glutamate (hydrolase route): step 1/1. In terms of biological role, catalyzes the conversion of N-formimidoyl-L-glutamate to L-glutamate and formamide. In Vibrio cholerae serotype O1 (strain ATCC 39541 / Classical Ogawa 395 / O395), this protein is Formimidoylglutamase.